The chain runs to 77 residues: U8-hexatoxin-Mg1a (77 aa).

A signal peptide spans 1–22; the sequence is MKVFSFTIGLVVIISLFAFALA. The propeptide occupies 23–43; the sequence is YDEETDLMKKLVEMERAIEQR. Intrachain disulfides connect Cys-46–Cys-60, Cys-53–Cys-65, and Cys-59–Cys-76.

In terms of tissue distribution, expressed by the venom gland.

It is found in the secreted. Its function is as follows. Intrathorax injection into crickets causes paralysis prolonged for more than 60 minutes, followed by recovery. This chain is U8-hexatoxin-Mg1a, found in Macrothele gigas (Japanese funnel web spider).